A 470-amino-acid chain; its full sequence is ATP synthase subunit beta (470 aa).

Position 158 to 165 (158 to 165) interacts with ATP; the sequence is GGAGVGKT.

The protein belongs to the ATPase alpha/beta chains family. As to quaternary structure, F-type ATPases have 2 components, CF(1) - the catalytic core - and CF(0) - the membrane proton channel. CF(1) has five subunits: alpha(3), beta(3), gamma(1), delta(1), epsilon(1). CF(0) has three main subunits: a(1), b(2) and c(9-12). The alpha and beta chains form an alternating ring which encloses part of the gamma chain. CF(1) is attached to CF(0) by a central stalk formed by the gamma and epsilon chains, while a peripheral stalk is formed by the delta and b chains.

The protein localises to the cell membrane. The catalysed reaction is ATP + H2O + 4 H(+)(in) = ADP + phosphate + 5 H(+)(out). Functionally, produces ATP from ADP in the presence of a proton gradient across the membrane. The catalytic sites are hosted primarily by the beta subunits. The polypeptide is ATP synthase subunit beta (Alkalihalophilus pseudofirmus (strain ATCC BAA-2126 / JCM 17055 / OF4) (Bacillus pseudofirmus)).